We begin with the raw amino-acid sequence, 188 residues long: Ribosome hibernation promotion factor (188 aa).

A disordered region spans residues 93–125; the sequence is KTRVNRKKRKESEHEPFPATPETPPETAVDHDK.

This sequence belongs to the HPF/YfiA ribosome-associated protein family. Long HPF subfamily. In terms of assembly, interacts with 100S ribosomes.

The protein resides in the cytoplasm. In terms of biological role, required for dimerization of active 70S ribosomes into 100S ribosomes in stationary phase; 100S ribosomes are translationally inactive and sometimes present during exponential growth. This Staphylococcus carnosus (strain TM300) protein is Ribosome hibernation promotion factor.